The sequence spans 520 residues: MLDATLKSQLKTYLERVTQPIEIVASLDDGAKSRELHDLLVEIASLSNLITFSADGTDARRPSFSLNRPGADISLRFAGIPMGHEFTSLVLALLQVGGHPSKASAEVIEQIQALEGEFNFETYFSLSCQNCPDVVQALNLMAVLNPNVRHVAIDGALFQDEVESRKIMAVPSIYLNGEVFGQGRMGLEEILGKIDTNAGARQAEKINAKEAFDVLVVGGGPAGAAAAIYAARKGIRTGVAAERFGGQVLDTLAIENFISVQETEGPKLATALEEHVKQYDVDIMNLQRGEALIPAAEGGLHEVRLAGGASLKAKTVILATGARWREMNVPGEQEYRGRGVAYCPHCDGPLFKGKRVAVIGGGNSGVEAAIDLAGIVAQVTLIEFDSQLRADAVLQRKLRSLPNVNVITSALTTEVLGNGEKVTGLRYKDRSTDEQHEVALEGIFVQIGLLPNTDWLKGTVELSPRGEIIVDAKGQTSIPGVFAAGDVTTVPYKQIVIAVGEGAKASLAAFDHLIRTSAPA.

213–228 (DVLVVGGGPAGAAAAI) serves as a coordination point for FAD. Cysteine 343 and cysteine 346 form a disulfide bridge. 355–369 (RVAVIGGGNSGVEAA) provides a ligand contact to NAD(+). 476–486 (TSIPGVFAAGD) contributes to the FAD binding site.

This sequence belongs to the class-II pyridine nucleotide-disulfide oxidoreductase family. Homodimer. FAD is required as a cofactor.

Its function is as follows. Serves to protect the cell against DNA damage by alkyl hydroperoxides. It can use either NADH or NADPH as electron donor for direct reduction of redox dyes or of alkyl hydroperoxides when combined with the AhpC protein. The chain is Alkyl hydroperoxide reductase subunit F (ahpF) from Pseudomonas putida (Arthrobacter siderocapsulatus).